The chain runs to 456 residues: Protein MGA1 (456 aa).

The DNA-binding element occupies 3–118; sequence PKTFVHQLHA…ILNKIQRKST (116 aa). Positions 229 to 299 are disordered; that stretch reads SIVQPQQPQQ…QPLPTVPPYS (71 aa). Low complexity-rich tracts occupy residues 231 to 246, 253 to 267, and 283 to 299; these read VQPQQPQQVLSPQALS, SGTLSSTDDLKTTSL, and QQQQQQQQPLPTVPPYS.

This sequence belongs to the HSF family.

The protein resides in the nucleus. In Saccharomyces cerevisiae (strain ATCC 204508 / S288c) (Baker's yeast), this protein is Protein MGA1 (MGA1).